The chain runs to 450 residues: Glucose-6-phosphate isomerase (450 aa).

Glu-289 (proton donor) is an active-site residue. Catalysis depends on residues His-310 and Lys-424.

The protein belongs to the GPI family.

The protein localises to the cytoplasm. The catalysed reaction is alpha-D-glucose 6-phosphate = beta-D-fructose 6-phosphate. It participates in carbohydrate biosynthesis; gluconeogenesis. It functions in the pathway carbohydrate degradation; glycolysis; D-glyceraldehyde 3-phosphate and glycerone phosphate from D-glucose: step 2/4. In terms of biological role, catalyzes the reversible isomerization of glucose-6-phosphate to fructose-6-phosphate. This Leptospira biflexa serovar Patoc (strain Patoc 1 / Ames) protein is Glucose-6-phosphate isomerase.